Consider the following 372-residue polypeptide: Alanine racemase (372 aa).

The active-site Proton acceptor; specific for D-alanine is the lysine 41. Lysine 41 is modified (N6-(pyridoxal phosphate)lysine). Arginine 139 contributes to the substrate binding site. Catalysis depends on tyrosine 268, which acts as the Proton acceptor; specific for L-alanine. A substrate-binding site is contributed by methionine 316.

This sequence belongs to the alanine racemase family. Pyridoxal 5'-phosphate serves as cofactor.

The catalysed reaction is L-alanine = D-alanine. It functions in the pathway amino-acid biosynthesis; D-alanine biosynthesis; D-alanine from L-alanine: step 1/1. In terms of biological role, catalyzes the interconversion of L-alanine and D-alanine. May also act on other amino acids. The chain is Alanine racemase (alr) from Borreliella burgdorferi (strain ATCC 35210 / DSM 4680 / CIP 102532 / B31) (Borrelia burgdorferi).